The sequence spans 527 residues: Flavonoid 3',5'-hydroxylase CYP75B138 (527 aa).

Residues 6–26 (LDIILFISAIVFLSIYYYNLF) form a helical membrane-spanning segment. Cysteine 459 lines the heme pocket.

This sequence belongs to the cytochrome P450 family. Heme serves as cofactor. As to expression, expressed in young cromes.

The protein localises to the membrane. It catalyses the reaction a 3',5'-unsubstituted flavanone + 2 reduced [NADPH--hemoprotein reductase] + 2 O2 = a 3',5'-dihydroxyflavanone + 2 oxidized [NADPH--hemoprotein reductase] + 2 H2O + 2 H(+). The enzyme catalyses (2S)-naringenin + 2 reduced [NADPH--hemoprotein reductase] + 2 O2 = (2S)-dihydrotricetin + 2 oxidized [NADPH--hemoprotein reductase] + 2 H2O + 2 H(+). It carries out the reaction (2R,3R)-dihydrokaempferol + 2 reduced [NADPH--hemoprotein reductase] + 2 O2 = (2R,3R)-dihydromyricetin + 2 oxidized [NADPH--hemoprotein reductase] + 2 H2O + 2 H(+). The catalysed reaction is kaempferol + 2 reduced [NADPH--hemoprotein reductase] + 2 O2 = myricetin + 2 oxidized [NADPH--hemoprotein reductase] + 2 H2O + 2 H(+). It participates in flavonoid metabolism. Its function is as follows. Flavonoid 3',5'-hydroxylase that catalyzes the 3'- and 5'-hydroxylation of flavanones, dihydroflavonols and flavonols. Converts narigenin to dihydrotricetin, dihydrokaempferol to dihydromyricetin and kaempferol to myricetin. This is Flavonoid 3',5'-hydroxylase CYP75B138 from Crocosmia x crocosmiiflora (Montbretia).